Reading from the N-terminus, the 390-residue chain is Leucine aminopeptidase 1 (390 aa).

An N-terminal signal peptide occupies residues methionine 1–serine 18. A propeptide spanning residues tyrosine 19–valine 90 is cleaved from the precursor. N-linked (GlcNAc...) asparagine glycosylation occurs at asparagine 120. The Zn(2+) site is built by histidine 190, aspartate 209, glutamate 248, and aspartate 275. Cysteines 324 and 328 form a disulfide. Histidine 357 is a Zn(2+) binding site.

This sequence belongs to the peptidase M28 family. M28E subfamily. As to quaternary structure, monomer. It depends on Zn(2+) as a cofactor.

It localises to the secreted. Its function is as follows. Extracellular aminopeptidase that allows assimilation of proteinaceous substrates. The protein is Leucine aminopeptidase 1 (lap1) of Emericella nidulans (strain FGSC A4 / ATCC 38163 / CBS 112.46 / NRRL 194 / M139) (Aspergillus nidulans).